The following is a 333-amino-acid chain: L-lactate dehydrogenase B chain (333 aa).

Residues 29 to 57 (GQVG…IEDK) and Arg-99 contribute to the NAD(+) site. Substrate contacts are provided by Arg-106, Asn-138, and Arg-169. Asn-138 contributes to the NAD(+) binding site. His-193 functions as the Proton acceptor in the catalytic mechanism. Thr-248 is a binding site for substrate.

This sequence belongs to the LDH/MDH superfamily. LDH family. In terms of assembly, homotetramer.

It is found in the cytoplasm. It carries out the reaction (S)-lactate + NAD(+) = pyruvate + NADH + H(+). Its pathway is fermentation; pyruvate fermentation to lactate; (S)-lactate from pyruvate: step 1/1. Interconverts simultaneously and stereospecifically pyruvate and lactate with concomitant interconversion of NADH and NAD(+). This chain is L-lactate dehydrogenase B chain (ldhb), found in Anguilla rostrata (American eel).